Here is a 185-residue protein sequence, read N- to C-terminus: Elongation factor P (185 aa).

It belongs to the elongation factor P family.

The protein resides in the cytoplasm. Its pathway is protein biosynthesis; polypeptide chain elongation. Its function is as follows. Involved in peptide bond synthesis. Stimulates efficient translation and peptide-bond synthesis on native or reconstituted 70S ribosomes in vitro. Probably functions indirectly by altering the affinity of the ribosome for aminoacyl-tRNA, thus increasing their reactivity as acceptors for peptidyl transferase. The sequence is that of Elongation factor P from Streptococcus pyogenes serotype M49 (strain NZ131).